Consider the following 544-residue polypeptide: Chaperonin GroEL 1 (544 aa).

Residues 29–32 (TLGP), 86–90 (DGTTT), glycine 413, 479–481 (NAA), and aspartate 495 contribute to the ATP site.

It belongs to the chaperonin (HSP60) family. As to quaternary structure, forms a cylinder of 14 subunits composed of two heptameric rings stacked back-to-back. Interacts with the co-chaperonin GroES.

It is found in the cytoplasm. The catalysed reaction is ATP + H2O + a folded polypeptide = ADP + phosphate + an unfolded polypeptide.. Together with its co-chaperonin GroES, plays an essential role in assisting protein folding. The GroEL-GroES system forms a nano-cage that allows encapsulation of the non-native substrate proteins and provides a physical environment optimized to promote and accelerate protein folding. The polypeptide is Chaperonin GroEL 1 (Trichormus variabilis (strain ATCC 29413 / PCC 7937) (Anabaena variabilis)).